The chain runs to 285 residues: UstYa family oxidase phomYe (285 aa).

A helical membrane pass occupies residues 32–54 (LFYGWKGIAFLSTLTNVLFISGF). A disordered region spans residues 143–165 (YGFGTPLTGPGSEGNEHDPTPWT). The HXXHC 1 motif lies at 177 to 181 (HQLHC). Asparagine 202 carries N-linked (GlcNAc...) asparagine glycosylation. Positions 209–213 (HVDHC) match the HXXHC 2 motif.

It belongs to the ustYa family.

Its subcellular location is the membrane. The protein operates within mycotoxin biosynthesis. Its function is as follows. UstYa family oxidase; part of the gene cluster that mediates the biosynthesis of the phomopsins, a group of hexapeptide mycotoxins which infects lupins and causes lupinosis disease in livestock. Within the pathway, phomYe catalyzes the desaturation of the Pro moiety into 3,4-dehydroproline (dPro). The pathway starts with the processing of the precursor phomA by several endopeptidases including kexin proteases as well as the cluster-specific S41 family peptidase phomP1 and the oligopeptidase phomG to produce 10 identical copies of the hexapeptide Tyr-Val-Ile-Pro-Ile-Asp. After being excised from the precursor peptide, the core peptides are cyclized and modified post-translationally by enzymes encoded within the gene cluster. The timing and order of proteolysis of the phomA precursor and PTMs are still unknown. Two tyrosinase-like enzymes, phomQ1 and phomQ2, catalyze the chlorination and hydroxylation of Tyr, respectively. PhomYb, is proposed to be involved in the construction of the macrocyclic structure. The other 4 ustYa family proteins may be involved in PTMs that generate the unique structure of phomopsin A. PhomYa is required for the hydroxylation of C-beta of Tyr. PhomYc, phomYd, and phomYe are responsible for the biosynthesis of 2,3-dehydroisoleucine (dIle), 2,3-dehydroaspartic acid (dAsp), and 3,4-dehydroproline (dPro), respectively. While dIle formation by phomYc is indispensable for the installation of dAsp by phomYd, the order of the other PTMs have not been elucidated yet. Most of the biosynthetic enzymes likely have broad substrate specificity, and thus, there might be a metabolic grid from a precursor to phomopsin A. The enzyme(s) responsible for the biosynthesis of 3,4-dehydrovaline (dVal) have also not been identified yet. Finally, phomM acts as an S-adenosylmethionine-dependent alpha-N-methyltransferase that catalyzes two successive N-methylation reactions, converting N-desmethyl-phomopsin A to phomopsin A and phomopsin A further to an N,N-dimethylated congener called phomopsin E. In Diaporthe leptostromiformis (Lupinosis disease fungus), this protein is UstYa family oxidase phomYe.